Reading from the N-terminus, the 133-residue chain is Fluoride-specific ion channel FluC 4 (133 aa).

The next 3 helical transmembrane spans lie at isoleucine 7 to valine 27, tryptophan 37 to glycine 57, and leucine 60 to glycine 80. Na(+) contacts are provided by glycine 79 and threonine 82. A helical transmembrane segment spans residues isoleucine 107–tryptophan 127.

Belongs to the fluoride channel Fluc/FEX (TC 1.A.43) family.

The protein localises to the cell inner membrane. The catalysed reaction is fluoride(in) = fluoride(out). Its activity is regulated as follows. Na(+) is not transported, but it plays an essential structural role and its presence is essential for fluoride channel function. Its function is as follows. Fluoride-specific ion channel. Important for reducing fluoride concentration in the cell, thus reducing its toxicity. In Brucella abortus biovar 1 (strain 9-941), this protein is Fluoride-specific ion channel FluC 4.